The primary structure comprises 378 residues: Calponin homolog OV9M (378 aa).

Over residues 1 to 20 (MPAQPAQENAQDADDAQANA) the composition is skewed to low complexity. The tract at residues 1 to 35 (MPAQPAQENAQDADDAQANATMETRVAGQGQPKRV) is disordered. 7 Calponin-like repeats span residues 50–75 (IPSQ…RNTQ), 98–123 (VRLQ…RDVC), 151–176 (VRLQ…RRET), 197–222 (IPLQ…RRET), 244–269 (IPSQ…RWEV), 285–310 (VRLQ…RNTT), and 330–355 (IPSQ…RDVK). A disordered region spans residues 175–194 (ETTKMTDSKHPDYDHERPDQ). The disordered stretch occupies residues 230–256 (HPEYDPESSIDSSTIPSQMGSNKYASQ). Polar residues predominate over residues 238–256 (SIDSSTIPSQMGSNKYASQ). The tract at residues 331–352 (PSQAGWNRGDSQKGMTGFGAPR) is disordered.

Belongs to the calponin family. Found in the longitudinal muscles below the hypodermis.

In terms of biological role, could be involved in muscle contraction. The sequence is that of Calponin homolog OV9M from Onchocerca volvulus.